Reading from the N-terminus, the 151-residue chain is Putative pre-16S rRNA nuclease (151 aa).

Belongs to the YqgF nuclease family.

The protein resides in the cytoplasm. Functionally, could be a nuclease involved in processing of the 5'-end of pre-16S rRNA. In Chlamydia pneumoniae (Chlamydophila pneumoniae), this protein is Putative pre-16S rRNA nuclease.